Here is a 684-residue protein sequence, read N- to C-terminus: ATP-dependent zinc metalloprotease FtsH (684 aa).

The Cytoplasmic segment spans residues 1-21 (MENKNDMFNKTPKSGKPKMFR). A helical membrane pass occupies residues 22-42 (FNLYWMYGLIFIMLVALYMTN). At 43–138 (DSSGTKELGW…QVRFEEGDDA (96 aa)) the chain is on the periplasmic side. The chain crosses the membrane as a helical span at residues 139-159 (IWNFLVSFGPIILLIGVWMFL). Topologically, residues 160–684 (MRRMSGGTGA…TEENKTGKIA (525 aa)) are cytoplasmic. Residue 236 to 243 (GPPGTGKT) coordinates ATP. His459 provides a ligand contact to Zn(2+). The active site involves Glu460. His463 and Asp534 together coordinate Zn(2+). The span at 647 to 662 (EKANGKNKENADKEAE) shows a compositional bias: basic and acidic residues. The disordered stretch occupies residues 647–684 (EKANGKNKENADKEAEADATTENVTDTPTEENKTGKIA).

The protein in the central section; belongs to the AAA ATPase family. In the C-terminal section; belongs to the peptidase M41 family. As to quaternary structure, homohexamer. Zn(2+) is required as a cofactor.

It is found in the cell inner membrane. In terms of biological role, acts as a processive, ATP-dependent zinc metallopeptidase for both cytoplasmic and membrane proteins. Plays a role in the quality control of integral membrane proteins. The polypeptide is ATP-dependent zinc metalloprotease FtsH (Parabacteroides distasonis (strain ATCC 8503 / DSM 20701 / CIP 104284 / JCM 5825 / NCTC 11152)).